Here is a 1029-residue protein sequence, read N- to C-terminus: MPKRTDLQTILILGSGPIQIGQAAEFDYSGTQALKALRGEGYRVVLVNSNPATIMTDPDLADATYLEPLTPEFVEKIIALEKPDAILPTLGGQTALNLAMELHERGTLEKYGVELIGAGVEAIKKGEDRELFQAAMKKIGVETARGKMVHSMEEAVEYQKEIGLPIVIRPSFTLGGTGGGIAHTYEEFLAITEGGLRDSPVTSVLLEESILGWKEYELEVMRDTADTVIIITSIENFDPMGVHTGDSITVAPAQTLSDVEYQRLRNQSLAIIREIGVATGGSNIQFAVNPDNGRVIVIEMNPRVSRSSALASKATGFPIAKIAALLAVGYHLDELPNDITRVTPASFEPSIDYVVTKIPRFAFEKFPGTSDHLGTQMRSVGEVMAIGRTFKESLQKALRSTESDIRGVYAEMDEAGLRALLYPNPRRIEAVIELLRRGESIDALFDATKIDRWFLEQIKEIIDAEHELLELGPISEWKYEYWREVKRLGFSDARIGEIVGLSELQVRQLRKAARATPVYKTVDTCAAEFEAYTPYHYSTYEWEDEVTGTDKPKVVILGSGPNRIGQGVEFDYATVHAVWALQEAGYETIMVNSNPETVSTDYDTADRLYFEPLTFEDVMNIVDHEKPVGVIVQLGGQTPLKLAKKLADAGAPIIGTSPETIHEAEDRASFNALCERLGLSQPRGKVAETPEQARQLAAELGFPLMARPSYVLGGRAMRTVRSMEELVTYLDEVYAAVEGQPSILLDQFLEGALELDVDTLCDGERAVVAGIMEHVEAAGVHSGDSACVLPPVNLSAELLARVKADTERLALELGVRGLMNVQWAVKDGTAYILEANPRASRTVPFVSKAVNHPLAKSAARIAVGHTLEQIGLTETPEAAMYSVKEVHLPFLKFKGVSPILGPEMKSTGESMGIDADPYLAFYRAQLGAKSYLPLSGTALLLGDGLDEVASTLQGAGLNVIREQDGNTLPDLLIDVTGSPLLRTALERGVPIVSTREAAVWTSKAIAAAQGSELRVRSLQDWQTQEAVAG.

The segment at methionine 1 to glutamate 402 is carboxyphosphate synthetic domain. ATP-binding residues include arginine 129, arginine 169, glycine 175, glycine 176, glutamate 208, isoleucine 210, glutamate 215, glycine 241, valine 242, histidine 243, glutamine 285, and glutamate 299. The 196-residue stretch at glutamine 133 to valine 328 folds into the ATP-grasp 1 domain. Glutamine 285, glutamate 299, and asparagine 301 together coordinate Mg(2+). Mn(2+)-binding residues include glutamine 285, glutamate 299, and asparagine 301. The oligomerization domain stretch occupies residues serine 403–aspartate 544. Residues glutamate 545–lysine 929 are carbamoyl phosphate synthetic domain. The ATP-grasp 2 domain occupies asparagine 671 to valine 863. Positions 707, 747, 749, 754, 779, 780, 781, 782, 822, and 834 each coordinate ATP. Glutamine 822, glutamate 834, and asparagine 836 together coordinate Mg(2+). The Mn(2+) site is built by glutamine 822, glutamate 834, and asparagine 836. Positions serine 930–alanine 1028 constitute an MGS-like domain. The tract at residues serine 930 to glycine 1029 is allosteric domain.

The protein belongs to the CarB family. Composed of two chains; the small (or glutamine) chain promotes the hydrolysis of glutamine to ammonia, which is used by the large (or ammonia) chain to synthesize carbamoyl phosphate. Tetramer of heterodimers (alpha,beta)4. It depends on Mg(2+) as a cofactor. The cofactor is Mn(2+).

It catalyses the reaction hydrogencarbonate + L-glutamine + 2 ATP + H2O = carbamoyl phosphate + L-glutamate + 2 ADP + phosphate + 2 H(+). The enzyme catalyses hydrogencarbonate + NH4(+) + 2 ATP = carbamoyl phosphate + 2 ADP + phosphate + 2 H(+). Its pathway is amino-acid biosynthesis; L-arginine biosynthesis; carbamoyl phosphate from bicarbonate: step 1/1. The protein operates within pyrimidine metabolism; UMP biosynthesis via de novo pathway; (S)-dihydroorotate from bicarbonate: step 1/3. Functionally, large subunit of the glutamine-dependent carbamoyl phosphate synthetase (CPSase). CPSase catalyzes the formation of carbamoyl phosphate from the ammonia moiety of glutamine, carbonate, and phosphate donated by ATP, constituting the first step of 2 biosynthetic pathways, one leading to arginine and/or urea and the other to pyrimidine nucleotides. The large subunit (synthetase) binds the substrates ammonia (free or transferred from glutamine from the small subunit), hydrogencarbonate and ATP and carries out an ATP-coupled ligase reaction, activating hydrogencarbonate by forming carboxy phosphate which reacts with ammonia to form carbamoyl phosphate. The protein is Carbamoyl phosphate synthase large chain of Deinococcus deserti (strain DSM 17065 / CIP 109153 / LMG 22923 / VCD115).